The primary structure comprises 131 residues: Large ribosomal subunit protein uL24 (131 aa).

This sequence belongs to the universal ribosomal protein uL24 family. In terms of assembly, part of the 50S ribosomal subunit.

One of two assembly initiator proteins, it binds directly to the 5'-end of the 23S rRNA, where it nucleates assembly of the 50S subunit. In terms of biological role, located at the polypeptide exit tunnel on the outside of the subunit. The polypeptide is Large ribosomal subunit protein uL24 (Korarchaeum cryptofilum (strain OPF8)).